The chain runs to 407 residues: Subtilisin-like protease CPC735_013710 (407 aa).

The signal sequence occupies residues 1–17 (MQLLNLSLFFLLPFATA). The propeptide occupies 18–115 (NPIPQDSQNI…VLPDQKIYLA (98 aa)). In terms of domain architecture, Inhibitor I9 spans 31-114 (QYIVTLKDGL…SVLPDQKIYL (84 aa)). The region spanning 124-407 (GWNLGYMSSK…VAYNGIQEML (284 aa)) is the Peptidase S8 domain. A glycan (N-linked (GlcNAc...) asparagine) is linked at Asn-145. Active-site charge relay system residues include Asp-162 and His-194. 3 N-linked (GlcNAc...) asparagine glycosylation sites follow: Asn-241, Asn-254, and Asn-341. The Charge relay system role is filled by Ser-350. The N-linked (GlcNAc...) asparagine glycan is linked to Asn-381.

Belongs to the peptidase S8 family.

The protein resides in the secreted. Secreted subtilisin-like serine protease with keratinolytic activity that contributes to pathogenicity. This is Subtilisin-like protease CPC735_013710 from Coccidioides posadasii (strain C735) (Valley fever fungus).